Here is a 128-residue protein sequence, read N- to C-terminus: Large ribosomal subunit protein mL52 (128 aa).

Residues 1 to 28 constitute a mitochondrion transit peptide; it reads MLQIAKLCLATSGRITAQRYVAVTTARA.

The protein belongs to the mitochondrion-specific ribosomal protein mL52 family. As to quaternary structure, component of the mitochondrial ribosome large subunit (39S) which comprises a 16S rRNA and about 50 distinct proteins.

It is found in the mitochondrion. In Drosophila pseudoobscura pseudoobscura (Fruit fly), this protein is Large ribosomal subunit protein mL52 (mRpL52).